Consider the following 497-residue polypeptide: MVPPPQPSLFQLTFLTGDKPILTLDDEFISSHTKVLLISDASDKIWEVKLDGNRLAGGWEEFAAVNNFSEGNVLVFRHNGEEIFHVAVSSESDDDESDDTDDSESDDESNDTDDSESDDSEDNGEGDSSLVNKEADSSSDCFLRARVTPYSLTKDRLDLSKDFKFMLFDEHNKPCEIYLVNEKGRKWTLRLSRNISSGAFYITRGWANFCSANGLIRGDFCYFKLSESGERPVLLLCSHESGNGHEDKEEEEECPEADTLKICSVGGCSNEKNTPSRFLTQKFTPSRFKTGQLYISMLSSGGLRESGIKKTGEIILLDNDGRKWPSYLNKTGQPGGEWCYIRKGWREMCEANGVEVNDSFVLELICEAANPIFKLHSKIRNKGKGNIVTSKKRALHARTVERTPGVEIDGERGSKRGCTRVSNRSNTYLKGKQPESCSVSDQVANVRQSVLDTLNTIRHFKAELKTRERNLEASLLELDALGERILGISKILNNNLA.

3 consecutive DNA-binding regions (TF-B3) follow at residues 7–92 (PSLF…SSES), 142–239 (FLRA…LCSH), and 278–379 (FLTQ…HSKI). Positions 87 to 135 (AVSSESDDDESDDTDDSESDDESNDTDDSESDDSEDNGEGDSSLVNKEA) are disordered. The span at 91 to 125 (ESDDDESDDTDDSESDDESNDTDDSESDDSEDNGE) shows a compositional bias: acidic residues.

As to expression, specifically expressed in the reproductive meristem.

Its subcellular location is the nucleus. In terms of biological role, may play a role in flower development. The protein is B3 domain-containing protein REM1 (REM1) of Brassica oleracea var. botrytis (Cauliflower).